The primary structure comprises 244 residues: Carbonyl reductase [NADPH] 2 (244 aa).

11 to 39 serves as a coordination point for NADP(+); the sequence is LVTGAGKGIGRDTVKALHVSGARVVAVTR. Ser136 contributes to the substrate binding site. Tyr149 functions as the Proton acceptor in the catalytic mechanism. Ser176 carries the phosphoserine modification.

Belongs to the short-chain dehydrogenases/reductases (SDR) family. Homotetramer. In terms of tissue distribution, lung (ciliated cells, non-ciliated bronchiolar cells and type-II alveolar pneumocytes). Low expression in all extrapulmonary tissues, including adipose tissue.

The protein resides in the mitochondrion matrix. The catalysed reaction is a secondary alcohol + NADP(+) = a ketone + NADPH + H(+). With respect to regulation, allosteric enzyme exhibiting negative cooperativity. Activated 2-5 fold by fatty acids. Its function is as follows. May function in the pulmonary metabolism of endogenous carbonyl compounds, such as aliphatic aldehydes and ketones derived from lipid peroxidation, 3-ketosteroids and fatty aldehydes, as well as in xenobiotic metabolism. The protein is Carbonyl reductase [NADPH] 2 (CBR2) of Sus scrofa (Pig).